Reading from the N-terminus, the 416-residue chain is CinA-like protein (416 aa).

It belongs to the CinA family.

The chain is CinA-like protein from Trichormus variabilis (strain ATCC 29413 / PCC 7937) (Anabaena variabilis).